A 312-amino-acid polypeptide reads, in one-letter code: MKALWALLLVPLLTGCLAEGELEVTDQLPGQSDQPWEQALNRFWDYLRWVQTLSDQVQEELQSSQVTQELTVLMEDTMTEVKAYKKELEEQLGPVAEETRARLAKEVQAAQARLGADMEDLRNRLGQYRNEVNTMLGQSTEELRSRLSTHLRKMRKRLMRDADDLQKRLAVYKAGAQEGAERGVSAIRERLGPLVEQGRQRTANLGAGAAQPLRDRAQALSDRIRGRLEEVGNQARDRLEEVREQMEEVRSKMEEQTQQIRLQAEIFQARIKGWFEPLVEDMQRQWANLMEKIQASVATNSIASTTVPLENQ.

The first 18 residues, Met-1–Ala-18, serve as a signal peptide directing secretion. Repeat copies occupy residues Val-72 to Gly-93, Pro-94 to Gly-115, Ala-116 to Gly-137, Gln-138 to Met-159, Arg-160 to Glu-181, Arg-182 to Ala-203, Asn-204 to Arg-225, and Gly-226 to Glu-247. Positions Val-72 to Glu-247 are 8 X 22 AA approximate tandem repeats. A Methionine sulfoxide modification is found at Met-135. Ser-139 is subject to Phosphoserine. An LDL and other lipoprotein receptors binding region spans residues His-150–Arg-160. The tract at residues His-150–Arg-160 is LDL receptor binding. Residue Met-154–Arg-157 coordinates heparin. The segment at Thr-202–Met-282 is lipid-binding and lipoprotein association. Ser-221–Leu-228 contacts heparin. Positions Gln-258–Gln-312 are homooligomerization. Positions Arg-270 to Met-282 are specificity for association with VLDL.

This sequence belongs to the apolipoprotein A1/A4/E family. Homotetramer. May interact with ABCA1; functionally associated with ABCA1 in the biogenesis of HDLs. May interact with APP/A4 amyloid-beta peptide; the interaction is extremely stable in vitro but its physiological significance is unclear. May interact with MAPT. May interact with MAP2. In the cerebrospinal fluid, interacts with secreted SORL1. Interacts with PMEL; this allows the loading of PMEL luminal fragment on ILVs to induce fibril nucleation. APOE exists as multiple glycosylated and sialylated glycoforms within cells and in plasma. The extent of glycosylation and sialylation are tissue and context specific. In terms of processing, glycated in plasma VLDL. Post-translationally, phosphorylated by FAM20C in the extracellular medium.

The protein resides in the secreted. It is found in the extracellular space. The protein localises to the extracellular matrix. It localises to the extracellular vesicle. Its subcellular location is the endosome. The protein resides in the multivesicular body. APOE is an apolipoprotein, a protein associating with lipid particles, that mainly functions in lipoprotein-mediated lipid transport between organs via the plasma and interstitial fluids. APOE is a core component of plasma lipoproteins and is involved in their production, conversion and clearance. Apolipoproteins are amphipathic molecules that interact both with lipids of the lipoprotein particle core and the aqueous environment of the plasma. As such, APOE associates with chylomicrons, chylomicron remnants, very low density lipoproteins (VLDL) and intermediate density lipoproteins (IDL) but shows a preferential binding to high-density lipoproteins (HDL). It also binds a wide range of cellular receptors including the LDL receptor/LDLR and the very low-density lipoprotein receptor/VLDLR that mediate the cellular uptake of the APOE-containing lipoprotein particles. Finally, APOE also has a heparin-binding activity and binds heparan-sulfate proteoglycans on the surface of cells, a property that supports the capture and the receptor-mediated uptake of APOE-containing lipoproteins by cells. In Rattus norvegicus (Rat), this protein is Apolipoprotein E (Apoe).